A 377-amino-acid chain; its full sequence is MTIPMMGNTTDDNNNMTISAIGFEGFEKRLEISFFEPGIFVDPEGKGLRALSKAHLDEILGPAECTIVDSLANESVDSYVLSESSLFVYSYKIIIKTCGTTKLLNSIPPILRLAETLFLDVKSVRYTRGSFIFPGAQSFPHRSFSEEVAVLDNYFAKLGAGSKAIVMGSPGKPQKWHVYSATAETNYDDPVYTLEMCMTGLDKEKASVFFKSQSASAAVMTESSGIRKILPDSVICDFDFEPCGYSMNAIEGPAVSTIHITPEDGFSYASFEAVGYDLQVVDLNLLVERVLACFEPKEFSIAVHADTDTADKVLARNCSVNVIGYSREEGGIEELGLGGSVFYQKFCKGTAPVCPPAPKKTLKCCWKEEEIDEEMEF.

Residues glutamate 24 and glutamate 27 contribute to the active site. Serine 84 serves as the catalytic Schiff-base intermediate with substrate; via pyruvic acid. The residue at position 84 (serine 84) is a Pyruvic acid (Ser); by autocatalysis. The active-site Proton donor; for catalytic activity is cysteine 98. Active-site proton acceptor; for processing activity residues include serine 246 and histidine 259.

This sequence belongs to the eukaryotic AdoMetDC family. It depends on pyruvate as a cofactor. Is synthesized initially as an inactive proenzyme. Formation of the active enzyme involves a self-maturation process in which the active site pyruvoyl group is generated from an internal serine residue via an autocatalytic post-translational modification. Two non-identical subunits are generated from the proenzyme in this reaction, and the pyruvate is formed at the N-terminus of the alpha chain, which is derived from the carboxyl end of the proenzyme. The post-translation cleavage follows an unusual pathway, termed non-hydrolytic serinolysis, in which the side chain hydroxyl group of the serine supplies its oxygen atom to form the C-terminus of the beta chain, while the remainder of the serine residue undergoes an oxidative deamination to produce ammonia and the pyruvoyl group blocking the N-terminus of the alpha chain.

It catalyses the reaction S-adenosyl-L-methionine + H(+) = S-adenosyl 3-(methylsulfanyl)propylamine + CO2. Its pathway is amine and polyamine biosynthesis; S-adenosylmethioninamine biosynthesis; S-adenosylmethioninamine from S-adenosyl-L-methionine: step 1/1. This is S-adenosylmethionine decarboxylase proenzyme 2 (SAMDC2) from Dianthus caryophyllus (Carnation).